A 255-amino-acid polypeptide reads, in one-letter code: Small ribosomal subunit protein eS1 (255 aa).

The segment covering 1 to 18 (MAVGKNKRLSKGKKGLKK) has biased composition (basic residues). Residues 1 to 22 (MAVGKNKRLSKGKKGLKKRAQD) form a disordered region. Ala-2 is modified (N-acetylalanine; partial).

It belongs to the eukaryotic ribosomal protein eS1 family. Component of the small ribosomal subunit. Mature ribosomes consist of a small (40S) and a large (60S) subunit. The 40S subunit contains about 33 different proteins and 1 molecule of RNA (18S). The 60S subunit contains about 49 different proteins and 3 molecules of RNA (25S, 5.8S and 5S).

It is found in the cytoplasm. The chain is Small ribosomal subunit protein eS1 from Uncinocarpus reesii (strain UAMH 1704).